The chain runs to 468 residues: Sorting and assembly machinery component 50 homolog A (468 aa).

The disordered stretch occupies residues 1-24; it reads MGTVHARSLDPLPMNGPDFGSPDD. Residues 44–124 enclose the POTRA domain; it reads VVVQRVHFEG…LDVTFEVTEL (81 aa).

Belongs to the SAM50/omp85 family. As to quaternary structure, associates with the mitochondrial contact site and cristae organizing system (MICOS) complex (also known as MINOS or MitOS complex).

It is found in the mitochondrion outer membrane. Its function is as follows. May play a role in the maintenance of the structure of mitochondrial cristae. In Xenopus laevis (African clawed frog), this protein is Sorting and assembly machinery component 50 homolog A (samm50-a).